A 244-amino-acid polypeptide reads, in one-letter code: tRNA1(Val) (adenine(37)-N6)-methyltransferase (244 aa).

Belongs to the methyltransferase superfamily. tRNA (adenine-N(6)-)-methyltransferase family.

It is found in the cytoplasm. It catalyses the reaction adenosine(37) in tRNA1(Val) + S-adenosyl-L-methionine = N(6)-methyladenosine(37) in tRNA1(Val) + S-adenosyl-L-homocysteine + H(+). Specifically methylates the adenine in position 37 of tRNA(1)(Val) (anticodon cmo5UAC). This chain is tRNA1(Val) (adenine(37)-N6)-methyltransferase, found in Photorhabdus laumondii subsp. laumondii (strain DSM 15139 / CIP 105565 / TT01) (Photorhabdus luminescens subsp. laumondii).